The sequence spans 195 residues: Imidazoleglycerol-phosphate dehydratase (195 aa).

Belongs to the imidazoleglycerol-phosphate dehydratase family.

It is found in the cytoplasm. It carries out the reaction D-erythro-1-(imidazol-4-yl)glycerol 3-phosphate = 3-(imidazol-4-yl)-2-oxopropyl phosphate + H2O. The protein operates within amino-acid biosynthesis; L-histidine biosynthesis; L-histidine from 5-phospho-alpha-D-ribose 1-diphosphate: step 6/9. The polypeptide is Imidazoleglycerol-phosphate dehydratase (Cereibacter sphaeroides (strain ATCC 17023 / DSM 158 / JCM 6121 / CCUG 31486 / LMG 2827 / NBRC 12203 / NCIMB 8253 / ATH 2.4.1.) (Rhodobacter sphaeroides)).